The following is a 750-amino-acid chain: 3-isopropylmalate dehydratase (750 aa).

[4Fe-4S] cluster contacts are provided by Cys353, Cys413, and Cys416. The segment at Lys492–Gly524 is disordered.

Belongs to the aconitase/IPM isomerase family. Monomer. It depends on [4Fe-4S] cluster as a cofactor.

It catalyses the reaction (2R,3S)-3-isopropylmalate = (2S)-2-isopropylmalate. It functions in the pathway amino-acid biosynthesis; L-leucine biosynthesis; L-leucine from 3-methyl-2-oxobutanoate: step 2/4. Its function is as follows. Catalyzes the isomerization between 2-isopropylmalate and 3-isopropylmalate, via the formation of 2-isopropylmaleate. The chain is 3-isopropylmalate dehydratase (LEU1) from Rhizopus niveus.